Here is a 203-residue protein sequence, read N- to C-terminus: Glycerol-3-phosphate acyltransferase (203 aa).

5 helical membrane-spanning segments follow: residues 5–25 (VLGLVLVAAGYLAGSIPFGVV), 55–75 (KLGIAVLLLDAAKAIVPILVA), 88–108 (FTVLVALAAFVGHLYPVWLGF), 114–134 (VATGLGIFLVLSPWAALAGAV), and 162–182 (FVAHGWTSPVSWAGLALAALI).

This sequence belongs to the PlsY family. In terms of assembly, probably interacts with PlsX.

Its subcellular location is the cell inner membrane. It carries out the reaction an acyl phosphate + sn-glycerol 3-phosphate = a 1-acyl-sn-glycero-3-phosphate + phosphate. Its pathway is lipid metabolism; phospholipid metabolism. Its function is as follows. Catalyzes the transfer of an acyl group from acyl-phosphate (acyl-PO(4)) to glycerol-3-phosphate (G3P) to form lysophosphatidic acid (LPA). This enzyme utilizes acyl-phosphate as fatty acyl donor, but not acyl-CoA or acyl-ACP. This chain is Glycerol-3-phosphate acyltransferase, found in Anaeromyxobacter sp. (strain Fw109-5).